Here is a 287-residue protein sequence, read N- to C-terminus: Thymidylate synthase (287 aa).

DUMP is bound at residue R21. H51 serves as a coordination point for (6R)-5,10-methylene-5,6,7,8-tetrahydrofolate. Position 150–151 (150–151) interacts with dUMP; it reads RR. C170 serves as the catalytic Nucleophile. DUMP contacts are provided by residues 190-193, N201, and 231-233; these read RSGD and HIY. D193 serves as a coordination point for (6R)-5,10-methylene-5,6,7,8-tetrahydrofolate. A (6R)-5,10-methylene-5,6,7,8-tetrahydrofolate-binding site is contributed by A286.

It belongs to the thymidylate synthase family. Bacterial-type ThyA subfamily. As to quaternary structure, homodimer.

It localises to the cytoplasm. It catalyses the reaction dUMP + (6R)-5,10-methylene-5,6,7,8-tetrahydrofolate = 7,8-dihydrofolate + dTMP. The protein operates within pyrimidine metabolism; dTTP biosynthesis. Functionally, catalyzes the reductive methylation of 2'-deoxyuridine-5'-monophosphate (dUMP) to 2'-deoxythymidine-5'-monophosphate (dTMP) while utilizing 5,10-methylenetetrahydrofolate (mTHF) as the methyl donor and reductant in the reaction, yielding dihydrofolate (DHF) as a by-product. This enzymatic reaction provides an intracellular de novo source of dTMP, an essential precursor for DNA biosynthesis. This Mycoplasma pneumoniae (strain ATCC 29342 / M129 / Subtype 1) (Mycoplasmoides pneumoniae) protein is Thymidylate synthase.